Consider the following 620-residue polypeptide: MKVKVERTTITKKTTTTKPKPDEEDNNDDNSSSNGVEVTATATATRETSDQLDFLPADLSATISTTTTPTATRATTTRNLILHPFDGMQSAPTLTTPTLTPTTLRSIDEAFYELTGETNNSVNAPFQAGFKPPPLALLPNSGPVVGIGSAVEAIVPAGNTLEIGHQPNLDVLSKLNYSNSIVGSDTDDSNASWNDQHRINGDTTDTSSGATDSTSYQNNSMLGNGSNGSGANNFTGALAANQSTGGRGANNNSNTNTSNSATPAARRGGGRRPNKAFNMTPEEEEKRRIRRERNKAAAARCRKRRVDQTNDLTEEVDALVKKGDTLKAEITTLTELRNQLKYVIEAHLPTCPKVRDDILSVSTCNGLIGPAALHSTGGSSCGSVHSNHSHNNNNNNNNSNDSSSGTITGFDATLNSTGRSHSPLDLKPVHIDENLLLAIKHEPLDNGLDSESSSLDQDGPPPAKRAVPLPTIAQLTASLTTPTNPNGGSLNTPIVSQAPVSFAAFAANANNPNSPTLNLLNKGPKARPNTLAVQRPFAAPMQLNASGTGGVVDGKGAPIQIQGVPIQTPSTGVFNFDSLMDGGTGLTPVSGPLIPNCSSQNKHPLELPTPTTEPSKLCPL.

Disordered stretches follow at residues M1–V36 and S184–R288. Polar residues predominate over residues S184–N194. Composition is skewed to low complexity over residues G201–N233 and A249–R266. The 64-residue stretch at E284 to H347 folds into the bZIP domain. The tract at residues K286–R305 is basic motif. Positions L312–L340 are leucine-zipper. The tract at residues S375–L414 is disordered. A compositionally biased stretch (low complexity) spans G377–G405. Phosphoserine is present on S422. 2 disordered regions span residues G447–A466 and S590–L620.

Belongs to the bZIP family. Fos subfamily. In terms of assembly, homodimer. Heterodimer with Jra. The kay-Jra heterodimer binds more stably to the AP-1 site than either of the two proteins alone.

Its subcellular location is the nucleus. Developmentally regulated transcription factor AP-1 binds and recognizes the enhancer DNA sequence: 5'-TGA[CG]TCA-3'. May play a role in the function or determination of a particular subset of cells in the developing embryo. It is able to carry out its function either independently of or in conjunction with Jra. This chain is Transcription factor kayak, found in Drosophila willistoni (Fruit fly).